A 358-amino-acid polypeptide reads, in one-letter code: Peptide chain release factor 1 (358 aa).

Q233 carries the post-translational modification N5-methylglutamine.

The protein belongs to the prokaryotic/mitochondrial release factor family. Post-translationally, methylated by PrmC. Methylation increases the termination efficiency of RF1.

It is found in the cytoplasm. In terms of biological role, peptide chain release factor 1 directs the termination of translation in response to the peptide chain termination codons UAG and UAA. This chain is Peptide chain release factor 1, found in Geobacillus sp. (strain WCH70).